A 1036-amino-acid polypeptide reads, in one-letter code: Protein smoothened (1036 aa).

A signal peptide spans 1-31 (MQYLNFPRMPNIMMFLEVAILCLWVVADASA). Over 32 to 258 (SSAKFGSTTP…DDEHRQIHKL (227 aa)) the chain is Extracellular. N-linked (GlcNAc...) asparagine glycosylation is found at Asn-55 and Asn-95. In terms of domain architecture, FZ spans 85 to 206 (VRRARCYPTS…TLFPTKCTNG (122 aa)). 4 disulfides stabilise this stretch: Cys-90–Cys-155, Cys-100–Cys-148, Cys-139–Cys-179, and Cys-172–Cys-194. N-linked (GlcNAc...) asparagine glycosylation is found at Asn-184, Asn-195, and Asn-213. 2 cysteine pairs are disulfide-bonded: Cys-218–Cys-238 and Cys-242–Cys-320. A helical membrane pass occupies residues 259 to 279 (IGWAGSICLLSNLFVVSTFFI). Topologically, residues 280 to 287 (DWKNANKY) are cytoplasmic. Residues 288–308 (PAVIVFYINLCFLIACVGWLL) form a helical membrane-spanning segment. At 309–339 (QFTSGSREDIVCRKDGTLRHSEPTAGENLSC) the chain is on the extracellular side. Residue Asn-336 is glycosylated (N-linked (GlcNAc...) asparagine). A disulfide bridge links Cys-339 with Cys-413. A helical transmembrane segment spans residues 340 to 360 (IVIFVLVYYFLTAGMVWFVFL). Residues 361-381 (TYAWHWRAMGHVQDRIDKKGS) are Cytoplasmic-facing. Residues 382–402 (YFHLVAWSLPLVLTITTMAFS) form a helical membrane-spanning segment. At 403 to 421 (EVDGNSIVGICFVGYINHS) the chain is on the extracellular side. Asn-419 is a glycosylation site (N-linked (GlcNAc...) asparagine). The chain crosses the membrane as a helical span at residues 422-442 (MRAGLLLGPLCGVILIGGYFI). At 443–469 (TRGMVMLFGLKHFANDIKSTSASNKIH) the chain is on the cytoplasmic side. Residues 470 to 490 (LIIMRMGVCALLTLVFILVAI) traverse the membrane as a helical segment. Residues 491–532 (ACHVTEFRHADEWAQSFRQFIICKISSVFEEKSSCRIENRPS) lie on the Extracellular side of the membrane. Cys-513 and Cys-525 are joined by a disulfide. A helical membrane pass occupies residues 533–553 (VGVLQLHLLCLFSSGIVMSTW). Residues 554–1036 (CWTPSSIETW…KLKMLLLPSK (483 aa)) are Cytoplasmic-facing. A phosphoserine mark is found at Ser-658, Ser-659, Ser-667, Ser-670, Ser-673, Ser-687, Ser-690, and Ser-693. Disordered stretches follow at residues 678 to 745 (HVSV…TSVE) and 870 to 902 (IKKS…KNPA). Positions 880-899 (RHSRNSARSQSKKSQKRHLK) are enriched in basic residues.

This sequence belongs to the G-protein coupled receptor Fz/Smo family. As to quaternary structure, interacts with cos. Post-translationally, phosphorylation by CkIalpha and PKA regulates smo accumulation at the cell surface and its signaling activity in response to hh. Expressed in olfactory sensory neurons (at protein level).

The protein localises to the cell membrane. It is found in the cell projection. The protein resides in the cilium. In terms of biological role, segment polarity protein required for correct patterning of every segment. G protein-coupled receptor which associates with the patched protein (ptc) to transduce the hedgehog (hh) signal through the activation of an inhibitory G-protein. In the absence of hh, ptc represses the constitutive signaling activity of smo through fused (fu). Essential component of a hh-signaling pathway which regulates the Duox-dependent gut immune response to bacterial uracil; required to activate Cad99C-dependent endosome formation, norpA-dependent Ca2+ mobilization and p38 MAPK, which are essential steps in the Duox-dependent production of reactive oxygen species (ROS) in response to intestinal bacterial infection. The chain is Protein smoothened (smo) from Drosophila melanogaster (Fruit fly).